The sequence spans 379 residues: Cytochrome b (379 aa).

A run of 4 helical transmembrane segments spans residues 34 to 54, 78 to 100, 113 to 133, and 179 to 199; these read YGSL…MLAM, WMIR…VHIG, TWNI…LGYV, and FFSL…IHLL. 2 residues coordinate heme b: His-84 and His-98. Heme b is bound by residues His-183 and His-197. His-202 lines the a ubiquinone pocket. The next 4 helical transmembrane spans lie at 225–245, 289–309, 320–340, and 345–365; these read FSIK…FLVL, LGGV…PIFS, WSGM…WIGA, and APYI…FFWM.

This sequence belongs to the cytochrome b family. The main subunits of complex b-c1 are: cytochrome b, cytochrome c1 and the Rieske protein. The cofactor is heme b.

Its subcellular location is the mitochondrion inner membrane. Its function is as follows. Component of the ubiquinol-cytochrome c reductase complex (complex III or cytochrome b-c1 complex) that is part of the mitochondrial respiratory chain. The b-c1 complex mediates electron transfer from ubiquinol to cytochrome c. Contributes to the generation of a proton gradient across the mitochondrial membrane that is then used for ATP synthesis. The polypeptide is Cytochrome b (mt:Cyt-b) (Epiperipatus biolleyi (Velvet worm)).